A 193-amino-acid chain; its full sequence is MSSCRVDKPSEIVDVGDKVWVKLIGREMKNDRIKVSLSMKVVNQGTGKDLDPNNVIIEQEERRRRSFQDYTGQKITLEAVLNTTCKKCGCKGHFAKDCFMQPGGTKYSLIPDEEEEKEEAKSAEFEKPVPTRNPSRKRKKEKKKKKHRDRKSSDSDSSDSESDTGKRARHTSKDSKAAKKKKKKKKHKKKHKE.

The 40-residue stretch at 1–40 folds into the S1 motif; truncated domain; the sequence is MSSCRVDKPSEIVDVGDKVWVKLIGREMKNDRIKVSLSMK. The residue at position 66 (S66) is a Phosphoserine. The CCHC-type zinc-finger motif lies at 83-100; it reads TTCKKCGCKGHFAKDCFM. K96 carries the N6-acetyllysine modification. Residues 113-193 are disordered; sequence EEEEKEEAKS…KKKHKKKHKE (81 aa). Residues 118-129 show a composition bias toward basic and acidic residues; that stretch reads EEAKSAEFEKPV. The span at 134–150 shows a compositional bias: basic residues; it reads PSRKRKKEKKKKKHRDR. S135 is modified (phosphoserine). Positions 163 to 177 are enriched in basic and acidic residues; it reads DTGKRARHTSKDSKA. Over residues 178–193 the composition is skewed to basic residues; it reads AKKKKKKKKHKKKHKE.

May interact with PNN. May associate with the 60 S ribosomal subunit.

The protein resides in the nucleus. It is found in the nucleolus. In Macaca fascicularis (Crab-eating macaque), this protein is Zinc finger CCHC domain-containing protein 17 (ZCCHC17).